The following is a 375-amino-acid chain: MPGGKKVVPSGSSSASPNAAATTTAAAAAAAAAPHSGTKRLETTEGASAQRDEEPEEEGEEDLRDGGVPFFINRGGLPVDEATWERMWKHVAKIHPDGEKVALRIRGATDLPKIPIPSVPTFQPTTPVPERLEAVQRYIRELQYNHTGTQFFEIKKSRPLTGLMDLAKEMTKEALPIKCLEAVILGIYLTNSMPTLERFPISFKTYFSGNYFRHIVLGVNFGGRYGALGMSRREDLMYKPPAFRTLSELVLDYEAAYGRCWHVLKKVKLGQCVSHDPHSVEQIEWKHSVLDVERLGREDFRKELERHARDMRLKIGKGTGPPSPTKDRKKDVSSPQRAQSSPHRRNSRSERRPSGEKKPAEPKAMPDLSGYQIRV.

Over residues 1–33 the composition is skewed to low complexity; it reads MPGGKKVVPSGSSSASPNAAATTTAAAAAAAAA. The disordered stretch occupies residues 1-69; sequence MPGGKKVVPS…EEDLRDGGVP (69 aa). Acidic residues predominate over residues 53–63; sequence EEPEEEGEEDL. Active-site residues include C179, H214, and S231. Residues 309–375 are disordered; sequence RDMRLKIGKG…PDLSGYQIRV (67 aa). The involved in heparin-binding and antiangiogenic activity stretch occupies residues 329–375; it reads KKDVSSPQRAQSSPHRRNSRSERRPSGEKKPAEPKAMPDLSGYQIRV. Over residues 347–361 the composition is skewed to basic and acidic residues; it reads SRSERRPSGEKKPAE.

This sequence belongs to the transglutaminase-like superfamily. Vasohibin family. In terms of assembly, interacts with SVBP; interaction enhances VASH1 tyrosine carboxypeptidase activity. In terms of processing, ubiquitinated in vitro. In terms of tissue distribution, expressed at low level in proliferating endothelial cells at the sprouting front but highly expressed in nonproliferating endothelial cells in the termination zone.

Its subcellular location is the cytoplasm. It is found in the secreted. The enzyme catalyses C-terminal L-alpha-aminoacyl-L-glutamyl-L-glutamyl-L-tyrosyl-[tubulin] + H2O = C-terminal L-alpha-aminoacyl-L-glutamyl-L-glutamyl-[tubulin] + L-tyrosine. Its function is as follows. Tyrosine carboxypeptidase that removes the C-terminal tyrosine residue of alpha-tubulin, thereby regulating microtubule dynamics and function. Acts as an angiogenesis inhibitor: inhibits migration, proliferation and network formation by endothelial cells as well as angiogenesis. This inhibitory effect is selective to endothelial cells as it does not affect the migration of smooth muscle cells or fibroblasts. The protein is Tubulinyl-Tyr carboxypeptidase 1 of Mus musculus (Mouse).